The primary structure comprises 122 residues: Large ribosomal subunit protein uL14 (122 aa).

The protein belongs to the universal ribosomal protein uL14 family. In terms of assembly, part of the 50S ribosomal subunit. Forms a cluster with proteins L3 and L19. In the 70S ribosome, L14 and L19 interact and together make contacts with the 16S rRNA in bridges B5 and B8.

Its function is as follows. Binds to 23S rRNA. Forms part of two intersubunit bridges in the 70S ribosome. The chain is Large ribosomal subunit protein uL14 from Desulforudis audaxviator (strain MP104C).